Here is a 398-residue protein sequence, read N- to C-terminus: Phospholipase C (398 aa).

An N-terminal signal peptide occupies residues 1–28 (MKRKIYKLLICATIATSLWAVRTTKVYA). Zn(2+)-binding residues include Trp29, His39, Asp84, His96, His154, Asp158, His164, His176, and Glu180. One can recognise a Zn-dependent PLC domain in the interval 29–278 (WDGKADGTGT…HDVSDGKDSS (250 aa)). The interval 275–283 (KDSSANKNV) is linker. One can recognise a PLAT domain in the interval 284-398 (NELVAYITTG…ISGNSTYNIK (115 aa)). Gly299, Thr300, Asp301, Asp321, Asn322, Gly324, Asn325, Asp326, and Asp365 together coordinate Ca(2+).

It depends on Ca(2+) as a cofactor. Zn(2+) is required as a cofactor.

The protein localises to the secreted. The enzyme catalyses a 1,2-diacyl-sn-glycero-3-phosphocholine + H2O = phosphocholine + a 1,2-diacyl-sn-glycerol + H(+). Bacterial hemolysins are exotoxins that attack blood cell membranes and cause cell rupture. Constitutes an essential virulence factor in gas gangrene. Binds to eukaryotic membranes where it hydrolyzes both phosphatidylcholine and sphingomyelin, causing cell rupture. The diacylglycerol produced can activate both the arachidonic acid pathway, leading to modulation of the inflammatory response cascade and thrombosis, and protein kinase C, leading to activation of eukaryotic phospholipases and further membrane damage. This is Phospholipase C (plc) from Clostridium perfringens.